The primary structure comprises 515 residues: Cytochrome P450 monooxygenase ptmJ (515 aa).

4 consecutive transmembrane segments (helical) span residues 6–26 (LGPF…LFVI), 50–70 (LGVV…LFCV), 82–102 (VFYL…EPVV), and 300–320 (VIIL…LFLH). A heme-binding site is contributed by cysteine 449.

The protein belongs to the cytochrome P450 family. Heme serves as cofactor.

It localises to the membrane. Its pathway is secondary metabolite biosynthesis. In terms of biological role, cytochrome P450 monooxygenase; part of the gene cluster that mediates the biosynthesis of the indole diterpenes penitrems. The geranylgeranyl diphosphate (GGPP) synthase ptmG catalyzes the first step in penitrem biosynthesis via conversion of farnesyl pyrophosphate and isopentyl pyrophosphate into geranylgeranyl pyrophosphate (GGPP). Condensation of indole-3-glycerol phosphate with GGPP by the prenyl transferase ptmC then forms 3-geranylgeranylindole (3-GGI). Epoxidation by the FAD-dependent monooxygenase ptmM leads to a epoxidized-GGI that is substrate of the terpene cyclase ptmB for cyclization to yield paspaline. Paspaline is subsequently converted to 13-desoxypaxilline by the cytochrome P450 monooxygenase ptmP, the latter being then converted to paxilline by the cytochrome P450 monooxygenase ptmQ. Paxilline is converted to beta-paxitriol via C-10 ketoreduction by the short-chain dehydrogenase ptmH which can be monoprenylated at the C-20 by the indole diterpene prenyltransferase ptmD. A two-step elimination (acetylation and elimination) process performed by the O-acetyltransferase ptmV and ptmI leads to the production of the prenylated form of penijanthine. The FAD-linked oxidoreductase ptmO then converts the prenylated form of penijanthine into PC-M5 which is in turn transformed into PC-M4 by the aromatic dimethylallyltransferase ptmE. Five sequential oxidative transformations performed by the cytochrome P450 monooxygenases ptmK, ptmU, ptmL, ptmN and ptmJ yield the various penitrem compounds. PtmK, ptmU and ptmM are involved in the formation of the key bicyclic ring of penitrem C via the formation of the intermediates secopenitrem D and penitrem D. PtmL catalyzes the epoxidation of penitrem D and C to yield penitrem B and F, respectively. PtmJ catalyzes the last benzylic hydroxylation to convert penitrem B to prenitrem E and penitrem F to penitrem A. The protein is Cytochrome P450 monooxygenase ptmJ of Penicillium ochrochloron.